The chain runs to 128 residues: Lymphocyte antigen 6D (128 aa).

The first 20 residues, 1–20 (MRTALLLLAALAVATGPALT), serve as a signal peptide directing secretion. The UPAR/Ly6 domain maps to 21 to 108 (LRCHVCTSSS…AAPTRTALAH (88 aa)). Intrachain disulfides connect cysteine 23–cysteine 45, cysteine 26–cysteine 32, cysteine 38–cysteine 63, cysteine 67–cysteine 86, and cysteine 87–cysteine 92. Asparagine 98 carries the GPI-anchor amidated asparagine lipid modification. Positions 99–128 (AAPTRTALAHSALSLGLALSLLAVILAPSL) are cleaved as a propeptide — removed in mature form.

In terms of tissue distribution, expressed exclusively at the outer cell surface of transitional epithelia and the keratinocyte of stratified squamous epithelia.

Its subcellular location is the cell membrane. Functionally, may act as a specification marker at earliest stage specification of lymphocytes between B- and T-cell development. Marks the earliest stage of B-cell specification. This chain is Lymphocyte antigen 6D (LY6D), found in Homo sapiens (Human).